A 304-amino-acid polypeptide reads, in one-letter code: Tyrosine recombinase XerC (304 aa).

Positions 2–88 (ANVKNFLTLF…ALRSFYKFLL (87 aa)) constitute a Core-binding (CB) domain. Positions 109–294 (RIPKFLYEKE…SKDMLRKTYM (186 aa)) constitute a Tyr recombinase domain. Catalysis depends on residues R149, K173, H246, R249, and H272. The O-(3'-phospho-DNA)-tyrosine intermediate role is filled by Y281.

The protein belongs to the 'phage' integrase family. XerC subfamily. As to quaternary structure, forms a cyclic heterotetrameric complex composed of two molecules of XerC and two molecules of XerD.

The protein localises to the cytoplasm. In terms of biological role, site-specific tyrosine recombinase, which acts by catalyzing the cutting and rejoining of the recombining DNA molecules. The XerC-XerD complex is essential to convert dimers of the bacterial chromosome into monomers to permit their segregation at cell division. It also contributes to the segregational stability of plasmids. This Bacillus licheniformis (strain ATCC 14580 / DSM 13 / JCM 2505 / CCUG 7422 / NBRC 12200 / NCIMB 9375 / NCTC 10341 / NRRL NRS-1264 / Gibson 46) protein is Tyrosine recombinase XerC.